A 1040-amino-acid chain; its full sequence is Multidrug resistance protein MdtB (1040 aa).

The next 12 helical transmembrane spans lie at 25–45 (LLMA…PVAA), 347–367 (LMLA…NIPA), 369–389 (IIPG…MVFL), 396–416 (LTLM…IVVI), 440–460 (IGFT…PLLF), 472–492 (FAVT…TLTP), 537–557 (WLTL…WIVI), 863–883 (LGST…VLGV), 888–908 (FIHP…ALLA), 910–930 (IIAG…LIGI), 968–988 (ILMT…STGV), and 998–1018 (IAMV…TPVI).

This sequence belongs to the resistance-nodulation-cell division (RND) (TC 2.A.6) family. MdtB subfamily. As to quaternary structure, part of a tripartite efflux system composed of MdtA, MdtB and MdtC. MdtB forms a heteromultimer with MdtC.

It is found in the cell inner membrane. In Salmonella choleraesuis (strain SC-B67), this protein is Multidrug resistance protein MdtB.